Here is a 263-residue protein sequence, read N- to C-terminus: Putative TATA-binding protein pB263R (263 aa).

It belongs to the asfivirus B263R family.

Putative TATA-binding protein. The sequence is that of Putative TATA-binding protein pB263R from African swine fever virus (isolate Tick/Malawi/Lil 20-1/1983) (ASFV).